The chain runs to 310 residues: Atrochrysone carboxyl ACP thioesterase CPUR_05436 (310 aa).

Zn(2+)-binding residues include H105, H107, D109, and H110. D109 serves as the catalytic Proton donor/acceptor.

This sequence belongs to the metallo-beta-lactamase superfamily. The cofactor is Zn(2+).

It carries out the reaction atrochrysone carboxyl-[ACP] + H2O = atrochrysone carboxylate + holo-[ACP] + H(+). The protein operates within pigment biosynthesis. In terms of biological role, atrochrysone carboxyl ACP thioesterase; part of the ergochrome gene cluster responsible for the typical purple-black color of the ergot sclerotia. The ergochrome gene cluster produces several ergot pigments including the yellow ergochrome secalonic acid and its derivatives, as well as the red anthraquinones endocrocin and clavorubin. The pathway begins with the synthesis of atrochrysone thioester by the polyketide synthase (PKS) CPUR_05437. The atrochrysone carboxyl ACP thioesterase CPUR_05436 then breaks the thioester bond and releases the atrochrysone carboxylic acid from CPUR_05437. The atrochrysone carboxylic acid is then converted to atrochrysone which is further transformed into emodin anthrone. The next step is performed by the anthrone oxygenase CPUR_05434 that catalyzes the oxidation of emodinanthrone to emodin. Emodin is further modified to yield monodictyphenone via several steps involving CPUR_05427, CPUR_05428, CPUR_05429 and CPUR_05430. The short chain dehydrogenase/reductase CPUR_05418 then catalyzes the C-5 ketoreduction to give the xanthone skeleton of the monomeric units. Ergochromes formation requires further dimerization steps of different xanthone units, probably catalyzed by the cytochrome P450 monooxygenase CPUR_05419. CPUR_05425, CPUR_05426 and CPUR_05431 are unique to Claviceps, thus it is likely that they are involved in further modification of xanthone units or in their dimerization. The yellow ergochromes and the red anthraquinone pigments endocrocin and clavorubin are products from the same PKS derived precursors and the latter are likely shunt products in the pathway of xanthone biosynthesis. It is proposed that atrochrysone carboxylic acid released from the PKS CPUR_05437 can also be converted to endocrocin anthrone which is further oxidized into endocrocin by CPUR_05435. Endocrocin could be then modified to clavorubin, possibly by CPUR_05423 and CPUR_05431. Clavorubin is the principal anthraquinone metabolite produced by the cluster with a much higher yield compared to endocrocin. The polypeptide is Atrochrysone carboxyl ACP thioesterase CPUR_05436 (Claviceps purpurea (strain 20.1) (Ergot fungus)).